The sequence spans 430 residues: Serine--tRNA ligase (430 aa).

An L-serine-binding site is contributed by 237-239 (TAE). 268 to 270 (RSE) serves as a coordination point for ATP. Residue Glu291 participates in L-serine binding. Residue 355–358 (EISS) coordinates ATP. L-serine is bound at residue Ser391.

This sequence belongs to the class-II aminoacyl-tRNA synthetase family. Type-1 seryl-tRNA synthetase subfamily. As to quaternary structure, homodimer. The tRNA molecule binds across the dimer.

The protein resides in the cytoplasm. It catalyses the reaction tRNA(Ser) + L-serine + ATP = L-seryl-tRNA(Ser) + AMP + diphosphate + H(+). It carries out the reaction tRNA(Sec) + L-serine + ATP = L-seryl-tRNA(Sec) + AMP + diphosphate + H(+). Its pathway is aminoacyl-tRNA biosynthesis; selenocysteinyl-tRNA(Sec) biosynthesis; L-seryl-tRNA(Sec) from L-serine and tRNA(Sec): step 1/1. Its function is as follows. Catalyzes the attachment of serine to tRNA(Ser). Is also able to aminoacylate tRNA(Sec) with serine, to form the misacylated tRNA L-seryl-tRNA(Sec), which will be further converted into selenocysteinyl-tRNA(Sec). This chain is Serine--tRNA ligase, found in Escherichia coli O139:H28 (strain E24377A / ETEC).